We begin with the raw amino-acid sequence, 182 residues long: Adenylate kinase (182 aa).

Gly12–Thr17 is a binding site for ATP. An NMP region spans residues Ser32–Val61. AMP is bound by residues Thr33, Arg38, Glu59–Val61, Gly85–Arg88, and Gln92. The interval Gly126 to Asp132 is LID. Residue Arg127 participates in ATP binding. AMP is bound by residues Arg129 and Arg140. An ATP-binding site is contributed by Gly168.

It belongs to the adenylate kinase family. As to quaternary structure, monomer.

The protein localises to the cytoplasm. The catalysed reaction is AMP + ATP = 2 ADP. It participates in purine metabolism; AMP biosynthesis via salvage pathway; AMP from ADP: step 1/1. In terms of biological role, catalyzes the reversible transfer of the terminal phosphate group between ATP and AMP. Plays an important role in cellular energy homeostasis and in adenine nucleotide metabolism. The sequence is that of Adenylate kinase from Prochlorococcus marinus (strain SARG / CCMP1375 / SS120).